A 683-amino-acid polypeptide reads, in one-letter code: Methionine--tRNA ligase (683 aa).

A 'HIGH' region motif is present at residues 14-24; that stretch reads PYANGSIHLGH. Residues C145, C148, C158, and C161 each contribute to the Zn(2+) site. The 'KMSKS' region motif lies at 331 to 335; that stretch reads KMSKS. K334 serves as a coordination point for ATP. Residues 545–572 form a disordered region; the sequence is ASKEDLTASQTDTGAAAPAGNGELAKDP. Residues 581–683 enclose the tRNA-binding domain; the sequence is TFAAVDLRVA…SGAKPGQRIK (103 aa).

This sequence belongs to the class-I aminoacyl-tRNA synthetase family. MetG type 1 subfamily. Homodimer. It depends on Zn(2+) as a cofactor.

Its subcellular location is the cytoplasm. It catalyses the reaction tRNA(Met) + L-methionine + ATP = L-methionyl-tRNA(Met) + AMP + diphosphate. In terms of biological role, is required not only for elongation of protein synthesis but also for the initiation of all mRNA translation through initiator tRNA(fMet) aminoacylation. The protein is Methionine--tRNA ligase of Pseudomonas fluorescens (strain Pf0-1).